Here is a 237-residue protein sequence, read N- to C-terminus: Endonuclease V (237 aa).

Mg(2+) contacts are provided by D46 and D114.

Belongs to the endonuclease V family. It depends on Mg(2+) as a cofactor.

It is found in the cytoplasm. The catalysed reaction is Endonucleolytic cleavage at apurinic or apyrimidinic sites to products with a 5'-phosphate.. Its function is as follows. DNA repair enzyme involved in the repair of deaminated bases. Selectively cleaves double-stranded DNA at the second phosphodiester bond 3' to a deoxyinosine leaving behind the intact lesion on the nicked DNA. The polypeptide is Endonuclease V (Xanthomonas oryzae pv. oryzae (strain PXO99A)).